Reading from the N-terminus, the 1024-residue chain is Beta-galactosidase (1024 aa).

2 residues coordinate substrate: Asn103 and Asp202. Asp202 contributes to the Na(+) binding site. Mg(2+) contacts are provided by Glu417, His419, and Glu462. Substrate contacts are provided by residues Glu462 and 538 to 541 (EYAH). Catalysis depends on Glu462, which acts as the Proton donor. The Nucleophile role is filled by Glu538. Asn598 is a Mg(2+) binding site. Residues Phe602 and Asn605 each coordinate Na(+). Asn605 and Trp1000 together coordinate substrate.

The protein belongs to the glycosyl hydrolase 2 family. In terms of assembly, homotetramer. Mg(2+) serves as cofactor. Requires Na(+) as cofactor.

It carries out the reaction Hydrolysis of terminal non-reducing beta-D-galactose residues in beta-D-galactosides.. In Escherichia coli O17:K52:H18 (strain UMN026 / ExPEC), this protein is Beta-galactosidase.